Here is a 133-residue protein sequence, read N- to C-terminus: ATP synthase epsilon chain, chloroplastic (133 aa).

It belongs to the ATPase epsilon chain family. F-type ATPases have 2 components, CF(1) - the catalytic core - and CF(0) - the membrane proton channel. CF(1) has five subunits: alpha(3), beta(3), gamma(1), delta(1), epsilon(1). CF(0) has three main subunits: a, b and c.

The protein resides in the plastid. It localises to the chloroplast thylakoid membrane. In terms of biological role, produces ATP from ADP in the presence of a proton gradient across the membrane. The protein is ATP synthase epsilon chain, chloroplastic of Solanum lycopersicum (Tomato).